The chain runs to 132 residues: Holo-[acyl-carrier-protein] synthase (132 aa).

Residues Asp-13 and Glu-63 each coordinate Mg(2+).

Belongs to the P-Pant transferase superfamily. AcpS family. The cofactor is Mg(2+).

The protein resides in the cytoplasm. The enzyme catalyses apo-[ACP] + CoA = holo-[ACP] + adenosine 3',5'-bisphosphate + H(+). Transfers the 4'-phosphopantetheine moiety from coenzyme A to a Ser of acyl-carrier-protein. In Gloeobacter violaceus (strain ATCC 29082 / PCC 7421), this protein is Holo-[acyl-carrier-protein] synthase.